A 243-amino-acid polypeptide reads, in one-letter code: Small ribosomal subunit protein uS3 (243 aa).

Residues 39-110 (IRTFIQKKYG…QVRINVVEVE (72 aa)) enclose the KH type-2 domain. Residues 216–243 (QTIPVGASPKRKASRRPQQFEDRSNENS) form a disordered region. Basic and acidic residues predominate over residues 233–243 (QQFEDRSNENS).

The protein belongs to the universal ribosomal protein uS3 family. As to quaternary structure, part of the 30S ribosomal subunit. Forms a tight complex with proteins S10 and S14.

Functionally, binds the lower part of the 30S subunit head. Binds mRNA in the 70S ribosome, positioning it for translation. This Prochlorococcus marinus (strain AS9601) protein is Small ribosomal subunit protein uS3.